Consider the following 63-residue polypeptide: Large ribosomal subunit protein uL29 (63 aa).

This sequence belongs to the universal ribosomal protein uL29 family.

The protein is Large ribosomal subunit protein uL29 of Klebsiella pneumoniae (strain 342).